The chain runs to 772 residues: Carnitine O-palmitoyltransferase 1, muscle isoform (772 aa).

Topologically, residues 1-47 (MAEAHQAVAFQFTVTPEGVDFRLSREALKHIYLSGINSWKKRLIRIK) are cytoplasmic. Residues 48 to 73 (NGILRGVYPGSPTSWLVVASATAGSS) traverse the membrane as a helical segment. Residues 74 to 102 (YYNVDISMGLVNHIQRCLPERYGPYWTPQ) are Mitochondrial intermembrane-facing. The chain crosses the membrane as a helical span at residues 103 to 122 (TRALLSMAVVSTGVWMIGIF). The Cytoplasmic segment spans residues 123–772 (FFRQTLKLLL…DLFQVPKTDS (650 aa)). His473 functions as the Proton acceptor in the catalytic mechanism. 555–567 (GKGLIKKCRTSPD) contacts CoA. (R)-carnitine contacts are provided by Tyr589 and Thr602.

It belongs to the carnitine/choline acetyltransferase family.

It localises to the mitochondrion outer membrane. The catalysed reaction is (R)-carnitine + hexadecanoyl-CoA = O-hexadecanoyl-(R)-carnitine + CoA. It participates in lipid metabolism; fatty acid beta-oxidation. Catalyzes the transfer of the acyl group of long-chain fatty acid-CoA conjugates onto carnitine, an essential step for the mitochondrial uptake of long-chain fatty acids and their subsequent beta-oxidation in the mitochondrion. In Sus scrofa (Pig), this protein is Carnitine O-palmitoyltransferase 1, muscle isoform (CPT1B).